Here is a 199-residue protein sequence, read N- to C-terminus: Acireductone dioxygenase 1 (199 aa).

4 residues coordinate Fe(2+): H99, H101, E105, and H144. H99, H101, E105, and H144 together coordinate Ni(2+).

Belongs to the acireductone dioxygenase (ARD) family. Fe(2+) is required as a cofactor. The cofactor is Ni(2+).

The protein localises to the cytoplasm. The protein resides in the nucleus. The enzyme catalyses 1,2-dihydroxy-5-(methylsulfanyl)pent-1-en-3-one + O2 = 4-methylsulfanyl-2-oxobutanoate + formate + 2 H(+). The catalysed reaction is 1,2-dihydroxy-5-(methylsulfanyl)pent-1-en-3-one + O2 = 3-(methylsulfanyl)propanoate + CO + formate + 2 H(+). It participates in amino-acid biosynthesis; L-methionine biosynthesis via salvage pathway; L-methionine from S-methyl-5-thio-alpha-D-ribose 1-phosphate: step 5/6. Its function is as follows. Catalyzes 2 different reactions between oxygen and the acireductone 1,2-dihydroxy-3-keto-5-methylthiopentene (DHK-MTPene) depending upon the metal bound in the active site. Fe-containing acireductone dioxygenase (Fe-ARD) produces formate and 2-keto-4-methylthiobutyrate (KMTB), the alpha-ketoacid precursor of methionine in the methionine recycle pathway. Ni-containing acireductone dioxygenase (Ni-ARD) produces methylthiopropionate, carbon monoxide and formate, and does not lie on the methionine recycle pathway. In Arabidopsis thaliana (Mouse-ear cress), this protein is Acireductone dioxygenase 1 (ARD1).